The chain runs to 339 residues: tRNA N6-adenosine threonylcarbamoyltransferase (339 aa).

The Fe cation site is built by His114 and His118. Substrate is bound by residues 137–141 (VVSGG), Asp170, Gly183, Asp187, and Asn277. Asp305 is a binding site for Fe cation.

Belongs to the KAE1 / TsaD family. Requires Fe(2+) as cofactor.

The protein localises to the cytoplasm. It carries out the reaction L-threonylcarbamoyladenylate + adenosine(37) in tRNA = N(6)-L-threonylcarbamoyladenosine(37) in tRNA + AMP + H(+). Functionally, required for the formation of a threonylcarbamoyl group on adenosine at position 37 (t(6)A37) in tRNAs that read codons beginning with adenine. Is involved in the transfer of the threonylcarbamoyl moiety of threonylcarbamoyl-AMP (TC-AMP) to the N6 group of A37, together with TsaE and TsaB. TsaD likely plays a direct catalytic role in this reaction. This Clostridium perfringens (strain ATCC 13124 / DSM 756 / JCM 1290 / NCIMB 6125 / NCTC 8237 / Type A) protein is tRNA N6-adenosine threonylcarbamoyltransferase.